The sequence spans 111 residues: MKTTTCSLLICISLLQLMVPVNTDETIEIIVENKVKELLANPANYPSTVTKTLSCTSVKTMNRWASCPAGMTATGCACGFACGSWEIQSGDTCNCLCLLVDWTTARCCQLS.

The N-terminal stretch at 1–23 is a signal peptide; it reads MKTTTCSLLICISLLQLMVPVNT. 5 cysteine pairs are disulfide-bonded: Cys-55/Cys-108, Cys-67/Cys-107, Cys-76/Cys-93, Cys-78/Cys-95, and Cys-82/Cys-97.

It belongs to the resistin/FIZZ family. As to quaternary structure, monomer. As to expression, highest levels in adipose tissue.

Its subcellular location is the secreted. Its function is as follows. Probable hormone. Plays a role in pulmonary vascular remodeling. This Mus musculus (Mouse) protein is Resistin-like alpha (Retnla).